We begin with the raw amino-acid sequence, 359 residues long: Glyceraldehyde-3-phosphate dehydrogenase, glycosomal (359 aa).

Residues 12-13 (RI), Asp38, Gln91, and Ser134 contribute to the NAD(+) site. D-glyceraldehyde 3-phosphate is bound by residues 165-167 (SCT), Thr197, 226-227 (TG), and Arg249. Cys166 acts as the Nucleophile in catalysis. Asn335 lines the NAD(+) pocket. The short motif at 357 to 359 (ARL) is the Microbody targeting signal element.

This sequence belongs to the glyceraldehyde-3-phosphate dehydrogenase family. As to quaternary structure, homotetramer.

It localises to the glycosome. It carries out the reaction D-glyceraldehyde 3-phosphate + phosphate + NAD(+) = (2R)-3-phospho-glyceroyl phosphate + NADH + H(+). It participates in carbohydrate degradation; glycolysis; pyruvate from D-glyceraldehyde 3-phosphate: step 1/5. This chain is Glyceraldehyde-3-phosphate dehydrogenase, glycosomal, found in Trypanosoma cruzi.